Consider the following 572-residue polypeptide: Ribonuclease Y (572 aa).

A helical transmembrane segment spans residues 1–21; sequence MPTLYVILSLLLGLIGGVLVQ. 2 disordered regions span residues 59-85 and 110-142; these read HEAA…DAAE and QLEA…ERED. 2 stretches are compositionally biased toward basic and acidic residues: residues 110–119 and 129–142; these read QLEAEREQAK and LSTD…ERED. One can recognise a KH domain in the interval 262-322; that stretch reads SVSVVPIPSD…LRREVARHVL (61 aa). The HD domain occupies 388–481; that stretch reads VLKHSVQVAH…VAAADAISAA (94 aa).

It belongs to the RNase Y family.

It is found in the cell membrane. Functionally, endoribonuclease that initiates mRNA decay. In Deinococcus radiodurans (strain ATCC 13939 / DSM 20539 / JCM 16871 / CCUG 27074 / LMG 4051 / NBRC 15346 / NCIMB 9279 / VKM B-1422 / R1), this protein is Ribonuclease Y.